The chain runs to 325 residues: Clavaminate synthase 2 (325 aa).

Residues His145, Glu147, and His280 each contribute to the Fe cation site. 2-oxoglutarate is bound at residue Arg294.

The protein belongs to the clavaminate synthase family. Fe(2+) serves as cofactor.

The catalysed reaction is deoxyamidinoproclavaminate + 2-oxoglutarate + O2 = amidinoproclavaminate + succinate + CO2. It carries out the reaction proclavaminate + 2-oxoglutarate + O2 = dihydroclavaminate + succinate + CO2 + H2O. It catalyses the reaction dihydroclavaminate + 2-oxoglutarate + O2 = clavaminate + succinate + CO2 + H2O. Its pathway is antibiotic biosynthesis; clavulanate biosynthesis; clavulanate from D-glyceraldehyde 3-phosphate and L-arginine: step 3/8. It functions in the pathway antibiotic biosynthesis; clavulanate biosynthesis; clavulanate from D-glyceraldehyde 3-phosphate and L-arginine: step 5/8. The protein operates within antibiotic biosynthesis; clavulanate biosynthesis; clavulanate from D-glyceraldehyde 3-phosphate and L-arginine: step 6/8. The sequence is that of Clavaminate synthase 2 (cs2) from Streptomyces clavuligerus.